A 178-amino-acid chain; its full sequence is ATP-dependent protease subunit HslV (178 aa).

Thr7 is an active-site residue. Residues Gly162, Cys165, and Thr168 each contribute to the Na(+) site.

This sequence belongs to the peptidase T1B family. HslV subfamily. In terms of assembly, a double ring-shaped homohexamer of HslV is capped on each side by a ring-shaped HslU homohexamer. The assembly of the HslU/HslV complex is dependent on binding of ATP.

The protein resides in the cytoplasm. The catalysed reaction is ATP-dependent cleavage of peptide bonds with broad specificity.. Allosterically activated by HslU binding. Functionally, protease subunit of a proteasome-like degradation complex believed to be a general protein degrading machinery. The polypeptide is ATP-dependent protease subunit HslV (Burkholderia orbicola (strain AU 1054)).